Here is a 314-residue protein sequence, read N- to C-terminus: tRNA dimethylallyltransferase (314 aa).

Residues 1–25 (MAEEPQRSPAPTSPFAFTVPSNSLS) form a disordered region. Position 40–47 (40–47 (GPTASGKS)) interacts with ATP. Position 42 to 47 (42 to 47 (TASGKS)) interacts with substrate.

It belongs to the IPP transferase family. Monomer. It depends on Mg(2+) as a cofactor.

The enzyme catalyses adenosine(37) in tRNA + dimethylallyl diphosphate = N(6)-dimethylallyladenosine(37) in tRNA + diphosphate. Functionally, catalyzes the transfer of a dimethylallyl group onto the adenine at position 37 in tRNAs that read codons beginning with uridine, leading to the formation of N6-(dimethylallyl)adenosine (i(6)A). The polypeptide is tRNA dimethylallyltransferase (Cereibacter sphaeroides (strain ATCC 17023 / DSM 158 / JCM 6121 / CCUG 31486 / LMG 2827 / NBRC 12203 / NCIMB 8253 / ATH 2.4.1.) (Rhodobacter sphaeroides)).